Reading from the N-terminus, the 510-residue chain is Cytochrome P450 monooxygenase ptmK (510 aa).

The chain crosses the membrane as a helical span at residues 2–22 (IIVTFFWVGIVLSAIWTFYKV). N-linked (GlcNAc...) asparagine glycans are attached at residues Asn-313, Asn-408, and Asn-443. Cys-456 is a binding site for heme.

This sequence belongs to the cytochrome P450 family. It depends on heme as a cofactor.

It localises to the membrane. It functions in the pathway secondary metabolite biosynthesis. Functionally, cytochrome P450 monooxygenase; part of the gene cluster that mediates the biosynthesis of the indole diterpenes penitrems. The geranylgeranyl diphosphate (GGPP) synthase ptmG catalyzes the first step in penitrem biosynthesis via conversion of farnesyl pyrophosphate and isopentyl pyrophosphate into geranylgeranyl pyrophosphate (GGPP). Condensation of indole-3-glycerol phosphate with GGPP by the prenyl transferase ptmC then forms 3-geranylgeranylindole (3-GGI). Epoxidation by the FAD-dependent monooxygenase ptmM leads to a epoxidized-GGI that is substrate of the terpene cyclase ptmB for cyclization to yield paspaline. Paspaline is subsequently converted to 13-desoxypaxilline by the cytochrome P450 monooxygenase ptmP, the latter being then converted to paxilline by the cytochrome P450 monooxygenase ptmQ. Paxilline is converted to beta-paxitriol via C-10 ketoreduction by the short-chain dehydrogenase ptmH which can be monoprenylated at the C-20 by the indole diterpene prenyltransferase ptmD. A two-step elimination (acetylation and elimination) process performed by the O-acetyltransferase ptmV and ptmI leads to the production of the prenylated form of penijanthine. The FAD-linked oxidoreductase ptmO then converts the prenylated form of penijanthine into PC-M5 which is in turn transformed into PC-M4 by the aromatic dimethylallyltransferase ptmE. Five sequential oxidative transformations performed by the cytochrome P450 monooxygenases ptmK, ptmU, ptmL, ptmN and ptmJ yield the various penitrem compounds. PtmK, ptmU and ptmM are involved in the formation of the key bicyclic ring of penitrem C via the formation of the intermediates secopenitrem D and penitrem D. PtmL catalyzes the epoxidation of penitrem D and C to yield penitrem B and F, respectively. PtmJ catalyzes the last benzylic hydroxylation to convert penitrem B to prenitrem E and penitrem F to penitrem A. In Penicillium ochrochloron, this protein is Cytochrome P450 monooxygenase ptmK.